The chain runs to 452 residues: Cobyrinate a,c-diamide synthase (452 aa).

Positions 248 to 441 (RVAYALDAAF…LHIHFYQNLA (194 aa)) constitute a GATase cobBQ-type domain. Cys330 functions as the Nucleophile in the catalytic mechanism.

Belongs to the CobB/CbiA family. Mg(2+) serves as cofactor.

The catalysed reaction is cob(II)yrinate + 2 L-glutamine + 2 ATP + 2 H2O = cob(II)yrinate a,c diamide + 2 L-glutamate + 2 ADP + 2 phosphate + 2 H(+). It participates in cofactor biosynthesis; adenosylcobalamin biosynthesis; cob(II)yrinate a,c-diamide from sirohydrochlorin (anaerobic route): step 10/10. Catalyzes the ATP-dependent amidation of the two carboxylate groups at positions a and c of cobyrinate, using either L-glutamine or ammonia as the nitrogen source. The protein is Cobyrinate a,c-diamide synthase of Listeria monocytogenes serovar 1/2a (strain ATCC BAA-679 / EGD-e).